A 541-amino-acid polypeptide reads, in one-letter code: L-ornithine N(5)-monooxygenase (541 aa).

Residues 50-58 (EKQPEFQWH) and glutamine 69 each bind FAD. Lysine 74 provides a ligand contact to substrate. NADP(+) is bound at residue 223 to 226 (SGQS). Residues 269–272 (NEIF) and asparagine 300 each bind substrate. 300-302 (NYS) lines the NADP(+) pocket. Residues 430–474 (TEIPKGPDGSLFDASEEEATWRPASPITPASPSPPSTPTSSALSQ) are disordered. 520–522 (SLL) lines the FAD pocket. Position 523 (serine 523) interacts with substrate.

This sequence belongs to the lysine N(6)-hydroxylase/L-ornithine N(5)-oxygenase family. In terms of assembly, homotetramer. It depends on FAD as a cofactor.

It carries out the reaction L-ornithine + NADPH + O2 = N(5)-hydroxy-L-ornithine + NADP(+) + H2O. The catalysed reaction is L-ornithine + NADH + O2 = N(5)-hydroxy-L-ornithine + NAD(+) + H2O. It functions in the pathway siderophore biosynthesis. Functionally, L-ornithine N(5)-monooxygenase; part of the siderophore basidioferrin biosynthetic pathway. The biosynthesis of basidioferrin depends on the hydroxylation of ornithine to N(5)-hydroxyornithine, catalyzed by the monooxygenase SMO1. The second step, the acylation of N(5)-hydroxy-L-ornithine is catalyzed by a not yet identified N-acyltransferase. Finally, assembly of basidioferrin is catalyzed by the nonribosomal peptide synthase (NRPS) NPS2 via amide bond formation between three L-AHO molecules to release the linear L-AHO trimer. The sequence is that of L-ornithine N(5)-monooxygenase (SMO1) from Ceriporiopsis subvermispora (strain B) (White-rot fungus).